Reading from the N-terminus, the 339-residue chain is tRNA-specific 2-thiouridylase MnmA (339 aa).

ATP contacts are provided by residues 6–13 and Met-32; that span reads AMSGGVDS. Residue Cys-92 is the Nucleophile of the active site. A disulfide bridge links Cys-92 with Cys-186. Gly-116 serves as a coordination point for ATP. The segment at 134–136 is interaction with tRNA; the sequence is KDQ. Cys-186 acts as the Cysteine persulfide intermediate in catalysis. The interval 288–289 is interaction with tRNA; the sequence is RY.

The protein belongs to the MnmA/TRMU family.

It is found in the cytoplasm. The catalysed reaction is S-sulfanyl-L-cysteinyl-[protein] + uridine(34) in tRNA + AH2 + ATP = 2-thiouridine(34) in tRNA + L-cysteinyl-[protein] + A + AMP + diphosphate + H(+). Catalyzes the 2-thiolation of uridine at the wobble position (U34) of tRNA, leading to the formation of s(2)U34. The sequence is that of tRNA-specific 2-thiouridylase MnmA from Campylobacter curvus (strain 525.92).